We begin with the raw amino-acid sequence, 138 residues long: Large-conductance mechanosensitive channel (138 aa).

The next 3 helical transmembrane spans lie at Val-19–Ile-39, Met-40–Ser-60, and Gly-81–Ile-101.

It belongs to the MscL family. Homopentamer.

The protein localises to the cell inner membrane. Its function is as follows. Channel that opens in response to stretch forces in the membrane lipid bilayer. May participate in the regulation of osmotic pressure changes within the cell. This chain is Large-conductance mechanosensitive channel, found in Afipia carboxidovorans (strain ATCC 49405 / DSM 1227 / KCTC 32145 / OM5) (Oligotropha carboxidovorans).